The primary structure comprises 570 residues: Sulfite reductase [NADPH] hemoprotein beta-component (570 aa).

C434, C440, C479, and C483 together coordinate [4Fe-4S] cluster. A siroheme-binding site is contributed by C483.

Belongs to the nitrite and sulfite reductase 4Fe-4S domain family. Alpha(8)-beta(8). The alpha component is a flavoprotein, the beta component is a hemoprotein. Siroheme serves as cofactor. Requires [4Fe-4S] cluster as cofactor.

It catalyses the reaction hydrogen sulfide + 3 NADP(+) + 3 H2O = sulfite + 3 NADPH + 4 H(+). It participates in sulfur metabolism; hydrogen sulfide biosynthesis; hydrogen sulfide from sulfite (NADPH route): step 1/1. Component of the sulfite reductase complex that catalyzes the 6-electron reduction of sulfite to sulfide. This is one of several activities required for the biosynthesis of L-cysteine from sulfate. The polypeptide is Sulfite reductase [NADPH] hemoprotein beta-component (Shigella dysenteriae serotype 1 (strain Sd197)).